A 699-amino-acid chain; its full sequence is Ciliated left-right organizer metallopeptidase (699 aa).

Positions 1–18 (MKMWRLLLLGVATGRCLH) are cleaved as a signal peptide. Topologically, residues 19-663 (EETQKSVRLL…SLDHNPSMTE (645 aa)) are extracellular. H238 lines the Zn(2+) pocket. The active site involves E239. Residues H242 and H318 each contribute to the Zn(2+) site. Residues 664 to 684 (LLLSTGFCLLVLILVGALGTL) traverse the membrane as a helical segment. Residues 685 to 699 (AYQKRAMLQVAPSTT) lie on the Cytoplasmic side of the membrane.

The protein belongs to the peptidase M8 family. The cofactor is Zn(2+). Specifically expressed in ciliated left-right organizer.

Its subcellular location is the membrane. In terms of biological role, putative metalloproteinase that plays a role in left-right patterning process. The sequence is that of Ciliated left-right organizer metallopeptidase from Mus musculus (Mouse).